A 339-amino-acid chain; its full sequence is Histidine protein methyltransferase 1 (339 aa).

Residues S333 and S338 each carry the phosphoserine modification.

The protein belongs to the methyltransferase superfamily. METTL18 family.

It localises to the cytoplasm. Its subcellular location is the nucleus. It carries out the reaction L-histidyl-[protein] + S-adenosyl-L-methionine = N(tele)-methyl-L-histidyl-[protein] + S-adenosyl-L-homocysteine + H(+). Its function is as follows. Protein-histidine N-methyltransferase that mediates methylation of target protein on His residues. This is Histidine protein methyltransferase 1 from Schizosaccharomyces pombe (strain 972 / ATCC 24843) (Fission yeast).